The following is a 447-amino-acid chain: N-succinylarginine dihydrolase (447 aa).

Substrate contacts are provided by residues alanine 19–serine 28, asparagine 110, and histidine 137–arginine 138. Glutamate 174 is an active-site residue. A substrate-binding site is contributed by arginine 212. The active site involves histidine 248. Residues aspartate 250 and asparagine 359 each contribute to the substrate site. Cysteine 365 (nucleophile) is an active-site residue.

The protein belongs to the succinylarginine dihydrolase family. As to quaternary structure, homodimer.

It carries out the reaction N(2)-succinyl-L-arginine + 2 H2O + 2 H(+) = N(2)-succinyl-L-ornithine + 2 NH4(+) + CO2. It participates in amino-acid degradation; L-arginine degradation via AST pathway; L-glutamate and succinate from L-arginine: step 2/5. Catalyzes the hydrolysis of N(2)-succinylarginine into N(2)-succinylornithine, ammonia and CO(2). This Salmonella typhi protein is N-succinylarginine dihydrolase.